The sequence spans 181 residues: Adenylate kinase (181 aa).

An ATP-binding site is contributed by Gly-10 to Thr-15. An NMP region spans residues Ser-30–Val-59. AMP contacts are provided by residues Thr-31, Arg-36, Glu-57–Val-59, Gly-85–Arg-88, and Gln-92. Positions Ala-126–Asp-132 are LID. Arg-127 serves as a coordination point for ATP. The AMP site is built by Arg-129 and Arg-140. Residue Gly-166 participates in ATP binding.

The protein belongs to the adenylate kinase family. As to quaternary structure, monomer.

Its subcellular location is the cytoplasm. It catalyses the reaction AMP + ATP = 2 ADP. The protein operates within purine metabolism; AMP biosynthesis via salvage pathway; AMP from ADP: step 1/1. Its function is as follows. Catalyzes the reversible transfer of the terminal phosphate group between ATP and AMP. Plays an important role in cellular energy homeostasis and in adenine nucleotide metabolism. The polypeptide is Adenylate kinase (Rhodococcus erythropolis (strain PR4 / NBRC 100887)).